We begin with the raw amino-acid sequence, 147 residues long: Large ribosomal subunit protein uL13 (147 aa).

It belongs to the universal ribosomal protein uL13 family. In terms of assembly, part of the 50S ribosomal subunit.

This protein is one of the early assembly proteins of the 50S ribosomal subunit, although it is not seen to bind rRNA by itself. It is important during the early stages of 50S assembly. The protein is Large ribosomal subunit protein uL13 of Nocardioides sp. (strain ATCC BAA-499 / JS614).